The sequence spans 342 residues: D-erythrose-4-phosphate dehydrogenase (342 aa).

Residue R11 to I12 participates in NAD(+) binding. Substrate contacts are provided by residues S153–T155, R199, T212–K213, and R235. C154 serves as the catalytic Nucleophile. N317 is a binding site for NAD(+).

Belongs to the glyceraldehyde-3-phosphate dehydrogenase family. Epd subfamily. In terms of assembly, homotetramer.

The protein resides in the cytoplasm. The enzyme catalyses D-erythrose 4-phosphate + NAD(+) + H2O = 4-phospho-D-erythronate + NADH + 2 H(+). It functions in the pathway cofactor biosynthesis; pyridoxine 5'-phosphate biosynthesis; pyridoxine 5'-phosphate from D-erythrose 4-phosphate: step 1/5. Its function is as follows. Catalyzes the NAD-dependent conversion of D-erythrose 4-phosphate to 4-phosphoerythronate. The sequence is that of D-erythrose-4-phosphate dehydrogenase from Shewanella denitrificans (strain OS217 / ATCC BAA-1090 / DSM 15013).